A 569-amino-acid polypeptide reads, in one-letter code: MRASQWFLVTQKETPNDAEIASHQLMLRSGMIRKLGSGLYTWMPLGLRVLRKVENIVREEMNKTHAMELLMPSVQPAELWQETGRWETFGGQLLTMKDSNQREYCFGPTHEEVITDIMRNELQSYKQLPVNFYQIQTKFRDEIRPRFGVMRAREFIMKDAYSFHLSLESLQETYKDMYQAYCRIFDRMGLKYRAVEADTGAIGGSASHEFQVLAESGEDLIFYSDASDYAANIEQATSLKPPKANQACNETITLVDTPNQKTIDEVASFLGIASNQTIKTLIVKGKEHPMVALVLRGDDELNEVKATKHPLVHSPLSFIDEELILKTLKTPLGSIGPIQLNIPVIVDHHALAMPSFVCGANQADKHFINAAWERDAKYDDAYDLRNVKEGDQSPDGRGTLHCCRGIEVGHVFQLGDKYAKAMNASVINEQGQLQTMIMGCYGLGITRVVAAAIEQHHDEHGIIWPQALAPFQVNIIPLNGARSQTVKEQAESLYQQLKSHGIDVLLDDRNERAGVLFADNDLIGIPHRLVVSERNLEQGCIEYKSRTSSETQLINLDKVVNFIIELINK.

The protein belongs to the class-II aminoacyl-tRNA synthetase family. ProS type 1 subfamily. As to quaternary structure, homodimer.

It is found in the cytoplasm. It carries out the reaction tRNA(Pro) + L-proline + ATP = L-prolyl-tRNA(Pro) + AMP + diphosphate. In terms of biological role, catalyzes the attachment of proline to tRNA(Pro) in a two-step reaction: proline is first activated by ATP to form Pro-AMP and then transferred to the acceptor end of tRNA(Pro). As ProRS can inadvertently accommodate and process non-cognate amino acids such as alanine and cysteine, to avoid such errors it has two additional distinct editing activities against alanine. One activity is designated as 'pretransfer' editing and involves the tRNA(Pro)-independent hydrolysis of activated Ala-AMP. The other activity is designated 'posttransfer' editing and involves deacylation of mischarged Ala-tRNA(Pro). The misacylated Cys-tRNA(Pro) is not edited by ProRS. In Legionella pneumophila (strain Paris), this protein is Proline--tRNA ligase.